Here is a 330-residue protein sequence, read N- to C-terminus: Aspartate--ammonia ligase (330 aa).

This sequence belongs to the class-II aminoacyl-tRNA synthetase family. AsnA subfamily.

The protein localises to the cytoplasm. The enzyme catalyses L-aspartate + NH4(+) + ATP = L-asparagine + AMP + diphosphate + H(+). It functions in the pathway amino-acid biosynthesis; L-asparagine biosynthesis; L-asparagine from L-aspartate (ammonia route): step 1/1. This chain is Aspartate--ammonia ligase, found in Edwardsiella ictaluri (strain 93-146).